The primary structure comprises 161 residues: Putative pre-16S rRNA nuclease (161 aa).

Belongs to the YqgF nuclease family.

It is found in the cytoplasm. Functionally, could be a nuclease involved in processing of the 5'-end of pre-16S rRNA. The sequence is that of Putative pre-16S rRNA nuclease from Bradyrhizobium sp. (strain ORS 278).